The sequence spans 362 residues: Phosphate acyltransferase (362 aa).

The segment at 343–362 is disordered; the sequence is TKKISTSTINPKTSETTKES. Residues 344–356 are compositionally biased toward polar residues; it reads KKISTSTINPKTS.

This sequence belongs to the PlsX family. Homodimer. Probably interacts with PlsY.

Its subcellular location is the cytoplasm. The enzyme catalyses a fatty acyl-[ACP] + phosphate = an acyl phosphate + holo-[ACP]. The protein operates within lipid metabolism; phospholipid metabolism. In terms of biological role, catalyzes the reversible formation of acyl-phosphate (acyl-PO(4)) from acyl-[acyl-carrier-protein] (acyl-ACP). This enzyme utilizes acyl-ACP as fatty acyl donor, but not acyl-CoA. In Aster yellows witches'-broom phytoplasma (strain AYWB), this protein is Phosphate acyltransferase.